The chain runs to 249 residues: Protein LicA homolog (249 aa).

This sequence belongs to the peptidase S49 family.

The protein is Protein LicA homolog (licA) of Metamycoplasma hominis (strain ATCC 23114 / DSM 25592 / NBRC 14850 / NCTC 10111 / PG21) (Mycoplasma hominis).